A 172-amino-acid polypeptide reads, in one-letter code: Large ribosomal subunit protein uL10 (172 aa).

The protein belongs to the universal ribosomal protein uL10 family. In terms of assembly, part of the ribosomal stalk of the 50S ribosomal subunit. The N-terminus interacts with L11 and the large rRNA to form the base of the stalk. The C-terminus forms an elongated spine to which L12 dimers bind in a sequential fashion forming a multimeric L10(L12)X complex.

Functionally, forms part of the ribosomal stalk, playing a central role in the interaction of the ribosome with GTP-bound translation factors. This is Large ribosomal subunit protein uL10 from Nitrobacter hamburgensis (strain DSM 10229 / NCIMB 13809 / X14).